Reading from the N-terminus, the 227-residue chain is Cytochrome c oxidase subunit 2 (227 aa).

The Mitochondrial intermembrane portion of the chain corresponds to Met1–Ser14. A helical membrane pass occupies residues Pro15–Thr45. The Mitochondrial matrix portion of the chain corresponds to Leu46–Gln59. Residues Glu60–Thr87 form a helical membrane-spanning segment. At Asp88–Leu227 the chain is on the mitochondrial intermembrane side. His161, Cys196, Glu198, Cys200, His204, and Met207 together coordinate Cu cation. Residue Glu198 participates in Mg(2+) binding.

The protein belongs to the cytochrome c oxidase subunit 2 family. Component of the cytochrome c oxidase (complex IV, CIV), a multisubunit enzyme composed of 14 subunits. The complex is composed of a catalytic core of 3 subunits MT-CO1, MT-CO2 and MT-CO3, encoded in the mitochondrial DNA, and 11 supernumerary subunits COX4I, COX5A, COX5B, COX6A, COX6B, COX6C, COX7A, COX7B, COX7C, COX8 and NDUFA4, which are encoded in the nuclear genome. The complex exists as a monomer or a dimer and forms supercomplexes (SCs) in the inner mitochondrial membrane with NADH-ubiquinone oxidoreductase (complex I, CI) and ubiquinol-cytochrome c oxidoreductase (cytochrome b-c1 complex, complex III, CIII), resulting in different assemblies (supercomplex SCI(1)III(2)IV(1) and megacomplex MCI(2)III(2)IV(2)). Found in a complex with TMEM177, COA6, COX18, COX20, SCO1 and SCO2. Interacts with TMEM177 in a COX20-dependent manner. Interacts with COX20. Interacts with COX16. Requires Cu cation as cofactor.

The protein localises to the mitochondrion inner membrane. It carries out the reaction 4 Fe(II)-[cytochrome c] + O2 + 8 H(+)(in) = 4 Fe(III)-[cytochrome c] + 2 H2O + 4 H(+)(out). Functionally, component of the cytochrome c oxidase, the last enzyme in the mitochondrial electron transport chain which drives oxidative phosphorylation. The respiratory chain contains 3 multisubunit complexes succinate dehydrogenase (complex II, CII), ubiquinol-cytochrome c oxidoreductase (cytochrome b-c1 complex, complex III, CIII) and cytochrome c oxidase (complex IV, CIV), that cooperate to transfer electrons derived from NADH and succinate to molecular oxygen, creating an electrochemical gradient over the inner membrane that drives transmembrane transport and the ATP synthase. Cytochrome c oxidase is the component of the respiratory chain that catalyzes the reduction of oxygen to water. Electrons originating from reduced cytochrome c in the intermembrane space (IMS) are transferred via the dinuclear copper A center (CU(A)) of subunit 2 and heme A of subunit 1 to the active site in subunit 1, a binuclear center (BNC) formed by heme A3 and copper B (CU(B)). The BNC reduces molecular oxygen to 2 water molecules using 4 electrons from cytochrome c in the IMS and 4 protons from the mitochondrial matrix. This chain is Cytochrome c oxidase subunit 2 (MT-CO2), found in Papio anubis (Olive baboon).